The chain runs to 227 residues: A-type potassium channel modulatory protein KCNIP1 (227 aa).

Residues 38–94 (LEMTMVCHRPEGLEQLEAQTNFTKRELQVLYRGFKNECPSGVVNEDTFKQIYAQFFP) enclose the EF-hand 1; degenerate domain. 3 consecutive EF-hand domains span residues 97-132 (DAST…LLRG), 133-168 (TVHE…IYDM), and 181-216 (TPRQ…DDNI). The Ca(2+) site is built by Asp-146, Asn-148, Asp-150, Tyr-152, Glu-157, Asp-194, Asn-196, Asp-198, and Glu-205. The tract at residues 214 to 227 (DNIMRSLQLFQNVM) is interaction with KCND2.

Belongs to the recoverin family. As to quaternary structure, component of heteromultimeric potassium channels. Identified in potassium channel complexes containing KCND1, KCND2, KCND3, KCNIP1, KCNIP2, KCNIP3, KCNIP4, DPP6 and DPP10. Part of a heterooctamer composed of the tetrameric channel and four KCNIP1 chains. Probably part of a complex consisting of KCNIP1, KCNIP2 isoform 3 and KCND2. Self-associates to form homodimers and homotetramers. Interacts with KCNIP2 isoform 3 in a calcium-dependent manner. Interacts with Naja atra venom CTX3. Interacts with KCND2; this interaction mediates the capture of both the N- and C-terminus of KCND2, thus preventing KCND2 N-type inactivation and modulates the channel gating kinetics. Interacts with KCND3; each KCNIP1 monomer interacts with two adjacent KCND3 subunits, through both the N-terminal inactivation ball of a KCND3 subunit and a C-terminal helix from the adjacent KCND3 subunit, clamping them together; this interaction stabilizes the tetrameric form and modulates the channel gating kinetics namely channel activation and inactivation kinetics and rate of recovery from inactivation. As to expression, isoform 1 and isoform 2 are expressed in brain and kidney. Isoform 1 is also expressed in liver, pancreas, skeletal muscle, small intestine and testis. Isoform 2 is also expressed in lung, pancreas, leukocytes, prostate and thymus.

The protein localises to the cell membrane. It is found in the cytoplasm. Its subcellular location is the cell projection. The protein resides in the dendrite. Its function is as follows. Regulatory subunit of Kv4/D (Shal)-type voltage-gated rapidly inactivating A-type potassium channels. Regulates channel density, inactivation kinetics and rate of recovery from inactivation in a calcium-dependent and isoform-specific manner. In vitro, modulates KCND1/Kv4.1 and KCND2/Kv4.2 currents. Increases the presence of KCND2 at the cell surface. In Homo sapiens (Human), this protein is A-type potassium channel modulatory protein KCNIP1.